The primary structure comprises 296 residues: 4-hydroxy-tetrahydrodipicolinate synthase (296 aa).

Threonine 49 serves as a coordination point for pyruvate. Catalysis depends on tyrosine 137, which acts as the Proton donor/acceptor. The active-site Schiff-base intermediate with substrate is the lysine 166. Isoleucine 208 provides a ligand contact to pyruvate.

It belongs to the DapA family. Homotetramer; dimer of dimers.

Its subcellular location is the cytoplasm. It carries out the reaction L-aspartate 4-semialdehyde + pyruvate = (2S,4S)-4-hydroxy-2,3,4,5-tetrahydrodipicolinate + H2O + H(+). It functions in the pathway amino-acid biosynthesis; L-lysine biosynthesis via DAP pathway; (S)-tetrahydrodipicolinate from L-aspartate: step 3/4. Catalyzes the condensation of (S)-aspartate-beta-semialdehyde [(S)-ASA] and pyruvate to 4-hydroxy-tetrahydrodipicolinate (HTPA). The polypeptide is 4-hydroxy-tetrahydrodipicolinate synthase (Chlorobium phaeovibrioides (strain DSM 265 / 1930) (Prosthecochloris vibrioformis (strain DSM 265))).